Reading from the N-terminus, the 347-residue chain is MLSPLIQSTLLMTLGLGTLVTFSSTSWILAWIGLEINTIAIIPLMAKTHHPRSIEATTKYFIAQSAGSATLLVTACLAAWHSGNWAISPSSDPIILNAMTLALMFKLGMAPMHFWLPEVMAGLDLTTGMILATWQKLAPITLLIQIAQDQNNAFILGPALLSVFVGGWGGLNQTQTRKIIAYSSIAHMGWIASMAPFNPTITWVTTLIYCLLTSTTFINLNTLKANKITALTMNKHNQISQMLLLLLLLSLGGLPPLTGFTNKLLASVELANQNLVIYLFMMMMGSLLSLFFYTRMCYLSIILSPPCPTTNLTLWRVTPNKPMALMTMLSINLFILTPQLMAIFIMY.

The next 11 membrane-spanning stretches (helical) occupy residues 2–22 (LSPL…LVTF), 26–46 (SWIL…PLMA), 60–80 (YFIA…LAAW), 94–114 (IILN…PMHF), 127–147 (TGMI…IQIA), 151–171 (NNAF…WGGL), 179–197 (IIAY…MAPF), 201–223 (ITWV…LNTL), 242–262 (MLLL…GFTN), 274–294 (NLVI…FFYT), and 325–345 (LMTM…AIFI).

The protein belongs to the complex I subunit 2 family.

The protein resides in the mitochondrion inner membrane. The enzyme catalyses a ubiquinone + NADH + 5 H(+)(in) = a ubiquinol + NAD(+) + 4 H(+)(out). In terms of biological role, core subunit of the mitochondrial membrane respiratory chain NADH dehydrogenase (Complex I) that is believed to belong to the minimal assembly required for catalysis. Complex I functions in the transfer of electrons from NADH to the respiratory chain. The immediate electron acceptor for the enzyme is believed to be ubiquinone. This is NADH-ubiquinone oxidoreductase chain 2 (MT-ND2) from Lampetra fluviatilis (European river lamprey).